The chain runs to 200 residues: Holliday junction branch migration complex subunit RuvA (200 aa).

The interval 1-64 is domain I; sequence MIGHLRGIIV…EDAHTLYGFH (64 aa). Residues 65–143 are domain II; the sequence is NDHERRLFRA…RWHTNDTPSP (79 aa). Positions 133-152 are disordered; sequence SRWHTNDTPSPEGLRSSNTQ. The interval 144–148 is flexible linker; that stretch reads EGLRS. Positions 149–200 are domain III; the sequence is SNTQPTQDAISALMALGYKPQEAKRAIDAIQKPDLSAETLIRLALKQMVLGT.

Belongs to the RuvA family. As to quaternary structure, homotetramer. Forms an RuvA(8)-RuvB(12)-Holliday junction (HJ) complex. HJ DNA is sandwiched between 2 RuvA tetramers; dsDNA enters through RuvA and exits via RuvB. An RuvB hexamer assembles on each DNA strand where it exits the tetramer. Each RuvB hexamer is contacted by two RuvA subunits (via domain III) on 2 adjacent RuvB subunits; this complex drives branch migration. In the full resolvosome a probable DNA-RuvA(4)-RuvB(12)-RuvC(2) complex forms which resolves the HJ.

It is found in the cytoplasm. Its function is as follows. The RuvA-RuvB-RuvC complex processes Holliday junction (HJ) DNA during genetic recombination and DNA repair, while the RuvA-RuvB complex plays an important role in the rescue of blocked DNA replication forks via replication fork reversal (RFR). RuvA specifically binds to HJ cruciform DNA, conferring on it an open structure. The RuvB hexamer acts as an ATP-dependent pump, pulling dsDNA into and through the RuvAB complex. HJ branch migration allows RuvC to scan DNA until it finds its consensus sequence, where it cleaves and resolves the cruciform DNA. The polypeptide is Holliday junction branch migration complex subunit RuvA (Coxiella burnetii (strain Dugway 5J108-111)).